The primary structure comprises 433 residues: SPI-2 type 3 secretion system ATPase (433 aa).

165–170 lines the ATP pocket; that stretch reads GVGKST.

The protein belongs to the ATPase alpha/beta chains family. T3SS ATPase subfamily. As to quaternary structure, the core secretion machinery of the T3SS is composed of approximately 20 different proteins, including cytoplasmic components, a base, an export apparatus and a needle. This subunit is part of the cytosolic complex. Forms homohexamers. Forms a complex with SsaK/SctL (stator protein) and SsaQ/SctQ (the major sorting platform component). Interacts with the T3SS-2 specific chaperones SsaE, SseA, SscA, SscB, and SrcA.

The protein resides in the cytoplasm. It catalyses the reaction ATP + H2O + cellular proteinSide 1 = ADP + phosphate + cellular proteinSide 2.. Functionally, ATPase component of the type III secretion system (T3SS), also called injectisome, which is used to inject bacterial effector proteins into eukaryotic host cells. Acts as a molecular motor to provide the energy that is required for the export of proteins. Required for type III secretion apparatus (T3SA) formation, secretion of a subset of SPI-2 effectors and virulence. May play a critical role in T3SS substrate recognition, disassembly of the effector/chaperone complex and unfolding of the effector in an ATP-dependent manner prior to secretion. Releases the effector protein SseB from the T3SS-2 specific chaperone SsaE in an ATP-dependent manner. This is SPI-2 type 3 secretion system ATPase from Salmonella typhimurium (strain LT2 / SGSC1412 / ATCC 700720).